Reading from the N-terminus, the 383-residue chain is S-adenosylmethionine synthase (383 aa).

Residue H15 coordinates ATP. D17 lines the Mg(2+) pocket. E43 is a K(+) binding site. 2 residues coordinate L-methionine: E56 and Q99. Positions 99–109 (QSPDINQGVDR) are flexible loop. Residues 164 to 166 (DAK), 230 to 231 (RF), D239, 245 to 246 (RK), A262, and K266 contribute to the ATP site. Residue D239 coordinates L-methionine. Residue K270 coordinates L-methionine.

Belongs to the AdoMet synthase family. Homotetramer; dimer of dimers. The cofactor is Mg(2+). It depends on K(+) as a cofactor.

Its subcellular location is the cytoplasm. It carries out the reaction L-methionine + ATP + H2O = S-adenosyl-L-methionine + phosphate + diphosphate. Its pathway is amino-acid biosynthesis; S-adenosyl-L-methionine biosynthesis; S-adenosyl-L-methionine from L-methionine: step 1/1. Catalyzes the formation of S-adenosylmethionine (AdoMet) from methionine and ATP. The overall synthetic reaction is composed of two sequential steps, AdoMet formation and the subsequent tripolyphosphate hydrolysis which occurs prior to release of AdoMet from the enzyme. The chain is S-adenosylmethionine synthase from Shewanella baltica (strain OS223).